A 190-amino-acid chain; its full sequence is dCTP deaminase (190 aa).

113 to 118 (KSTYAR) serves as a coordination point for dCTP. Catalysis depends on Glu139, which acts as the Proton donor/acceptor. The dCTP site is built by Gln158, Tyr172, Lys181, and Gln182.

This sequence belongs to the dCTP deaminase family. As to quaternary structure, homotrimer.

It catalyses the reaction dCTP + H2O + H(+) = dUTP + NH4(+). The protein operates within pyrimidine metabolism; dUMP biosynthesis; dUMP from dCTP (dUTP route): step 1/2. Its function is as follows. Catalyzes the deamination of dCTP to dUTP. This Chlamydia felis (strain Fe/C-56) (Chlamydophila felis) protein is dCTP deaminase.